A 515-amino-acid polypeptide reads, in one-letter code: 1-pyrroline-5-carboxylate dehydrogenase (515 aa).

Catalysis depends on residues Glu286 and Cys320.

The protein belongs to the aldehyde dehydrogenase family. RocA subfamily.

It carries out the reaction L-glutamate 5-semialdehyde + NAD(+) + H2O = L-glutamate + NADH + 2 H(+). It participates in amino-acid degradation; L-proline degradation into L-glutamate; L-glutamate from L-proline: step 2/2. In Anoxybacillus flavithermus (strain DSM 21510 / WK1), this protein is 1-pyrroline-5-carboxylate dehydrogenase.